The following is a 448-amino-acid chain: Trigger factor (448 aa).

The PPIase FKBP-type domain occupies 162–243 (DDFAIIDIEA…VQQTKERKLP (82 aa)). The tract at residues 426-448 (DEGKAVDPSEYFGEEEESAEESE) is disordered. The span at 437 to 448 (FGEEEESAEESE) shows a compositional bias: acidic residues.

Belongs to the FKBP-type PPIase family. Tig subfamily.

It is found in the cytoplasm. It carries out the reaction [protein]-peptidylproline (omega=180) = [protein]-peptidylproline (omega=0). Functionally, involved in protein export. Acts as a chaperone by maintaining the newly synthesized protein in an open conformation. Functions as a peptidyl-prolyl cis-trans isomerase. The sequence is that of Trigger factor from Corynebacterium diphtheriae (strain ATCC 700971 / NCTC 13129 / Biotype gravis).